The sequence spans 1108 residues: Multidrug resistance regulator 1 (1108 aa).

A compositionally biased stretch (polar residues) spans 1–19 (MSIATTPIETPKSPKSTEP). The tract at residues 1 to 27 (MSIATTPIETPKSPKSTEPQVRKRKKV) is disordered. Positions 31 to 59 (CTNCRKRKIRCDRQHPCNNCIKSKKHNAC) form a DNA-binding region, zn(2)-C6 fungal-type. Polar residues predominate over residues 68 to 83 (PANFSTNGSSHGNTVP). 3 disordered regions span residues 68–138 (PANF…SENE), 968–990 (DQTYSTSSESSSTPNKDSPLDSR), and 1021–1064 (AQQQ…YYGN). Basic and acidic residues-rich tracts occupy residues 86 to 104 (RPYEESARIPIRFDAEAPR) and 114 to 123 (NERKNSKKSP). The span at 124–138 (DNTVANNQQTASENE) shows a compositional bias: polar residues. Residues 134–165 (ASENEVTITLSELNMLKQRLQNIEANINAQSN) adopt a coiled-coil conformation. 2 stretches are compositionally biased toward low complexity: residues 970–980 (TYSTSSESSST) and 1023–1041 (QQRQQESQPFTSSQSQSQS).

It is found in the nucleus. In terms of biological role, transcription factor that acts as the central regulator of the MDR1 efflux pump. Other target genes include those encoding oxidoreductases, whose up-regulation in fluconazole-resistant isolates may help to prevent cell damage resulting from the generation of toxic molecules in the presence of fluconazole and thereby contribute to drug resistance. This is Multidrug resistance regulator 1 from Candida albicans (strain SC5314 / ATCC MYA-2876) (Yeast).